The chain runs to 290 residues: N-acetylmannosamine kinase (290 aa).

Residues 6–13 and 132–139 each bind ATP; these read ALDIGGTK and GVGGGIIL. Residues histidine 156, cysteine 166, cysteine 168, and cysteine 173 each contribute to the Zn(2+) site.

It belongs to the ROK (NagC/XylR) family. NanK subfamily. Homodimer.

The enzyme catalyses an N-acyl-D-mannosamine + ATP = an N-acyl-D-mannosamine 6-phosphate + ADP + H(+). It participates in amino-sugar metabolism; N-acetylneuraminate degradation; D-fructose 6-phosphate from N-acetylneuraminate: step 2/5. Functionally, catalyzes the phosphorylation of N-acetylmannosamine (ManNAc) to ManNAc-6-P. The chain is N-acetylmannosamine kinase from Yersinia pestis (strain Pestoides F).